The primary structure comprises 172 residues: Small ribosomal subunit protein uS5 (172 aa).

The 64-residue stretch at 17–80 folds into the S5 DRBM domain; it reads LREKMISVNR…EQARRNMFKV (64 aa).

Belongs to the universal ribosomal protein uS5 family. In terms of assembly, part of the 30S ribosomal subunit. Contacts proteins S4 and S8.

Functionally, with S4 and S12 plays an important role in translational accuracy. Located at the back of the 30S subunit body where it stabilizes the conformation of the head with respect to the body. The sequence is that of Small ribosomal subunit protein uS5 from Paraburkholderia phymatum (strain DSM 17167 / CIP 108236 / LMG 21445 / STM815) (Burkholderia phymatum).